A 303-amino-acid polypeptide reads, in one-letter code: Probable 5-dehydro-4-deoxyglucarate dehydratase (303 aa).

It belongs to the DapA family.

It carries out the reaction 5-dehydro-4-deoxy-D-glucarate + H(+) = 2,5-dioxopentanoate + CO2 + H2O. It participates in carbohydrate acid metabolism; D-glucarate degradation; 2,5-dioxopentanoate from D-glucarate: step 2/2. The sequence is that of Probable 5-dehydro-4-deoxyglucarate dehydratase from Agrobacterium fabrum (strain C58 / ATCC 33970) (Agrobacterium tumefaciens (strain C58)).